The primary structure comprises 1295 residues: DNA-directed RNA polymerase subunit beta' (1295 aa).

Zn(2+) contacts are provided by C66, C68, C81, and C84. D562, D564, and D566 together coordinate Mg(2+). Positions 901, 975, 982, and 985 each coordinate Zn(2+).

It belongs to the RNA polymerase beta' chain family. The RNAP catalytic core consists of 2 alpha, 1 beta, 1 beta' and 1 omega subunit. When a sigma factor is associated with the core the holoenzyme is formed, which can initiate transcription. Mg(2+) serves as cofactor. The cofactor is Zn(2+).

The enzyme catalyses RNA(n) + a ribonucleoside 5'-triphosphate = RNA(n+1) + diphosphate. Its function is as follows. DNA-dependent RNA polymerase catalyzes the transcription of DNA into RNA using the four ribonucleoside triphosphates as substrates. The protein is DNA-directed RNA polymerase subunit beta' of Rubrobacter xylanophilus (strain DSM 9941 / JCM 11954 / NBRC 16129 / PRD-1).